A 272-amino-acid chain; its full sequence is Eukaryotic translation initiation factor 4E homolog (272 aa).

Residues G249 to Y272 form a disordered region. Positions R255–Y272 are enriched in polar residues.

Belongs to the eukaryotic initiation factor 4E family.

In terms of biological role, recognizes and binds the 7-methylguanosine-containing mRNA cap during an early step in the initiation of protein synthesis and facilitates ribosome binding by inducing the unwinding of the mRNAs secondary structures. This is Eukaryotic translation initiation factor 4E homolog from Acanthamoeba polyphaga mimivirus (APMV).